The sequence spans 338 residues: uncharacterized protein (338 aa).

Positions 1-29 are cleaved as a signal peptide; the sequence is MIKQLYKNITICSLAISTALTVFPATSYA.

The protein belongs to the aerolysin family.

This is an uncharacterized protein from Staphylococcus aureus (strain Mu50 / ATCC 700699).